We begin with the raw amino-acid sequence, 199 residues long: Peroxiredoxin 2 (199 aa).

Residues 1-152 (MGQKAPDFTV…IIRVIKALQF (152 aa)) enclose the Thioredoxin domain. Residue Cys-40 is the Cysteine sulfenic acid (-SOH) intermediate of the active site. A substrate-binding site is contributed by Arg-115.

This sequence belongs to the peroxiredoxin family. Prx6 subfamily. Homodecamer. Pentamer of dimers that assemble into a ring structure.

The protein resides in the cytoplasm. It catalyses the reaction a hydroperoxide + [thioredoxin]-dithiol = an alcohol + [thioredoxin]-disulfide + H2O. Functionally, thiol-specific peroxidase that catalyzes the reduction of hydrogen peroxide and organic hydroperoxides to water and alcohols, respectively. Plays a role in cell protection against oxidative stress by detoxifying peroxides. The polypeptide is Peroxiredoxin 2 (Thermoplasma acidophilum (strain ATCC 25905 / DSM 1728 / JCM 9062 / NBRC 15155 / AMRC-C165)).